The primary structure comprises 98 residues: uncharacterized protein (98 aa).

This sequence belongs to the HesB/IscA family.

This is an uncharacterized protein from Staphylococcus saprophyticus subsp. saprophyticus (strain ATCC 15305 / DSM 20229 / NCIMB 8711 / NCTC 7292 / S-41).